Here is a 274-residue protein sequence, read N- to C-terminus: MQNITQSWFVQGMIKATTDAWLKGWDERNGGNLTLRLDDADIAPYHDNFHAQPRYIPLSQPMPLLANTPFIVTGSGKFFRNVQLDPAANLGVVKVDSDGAGYHILWGLTNEAVPTSELPAHFLSHCERIKATNGKDRVIMHCHATNLIALTYVLENDTAVFTRQLWEGSTECLVVFPDGVGILPWMVPGTDEIGQATAQEMQKHSLVLWPFHGVFGSGPTLDETFGLIDTAEKSAQVLVKVYSMGGMKQTISREELIALGQRFGVTPLASALAL.

E117 is a catalytic residue. Zn(2+)-binding residues include H141, H143, and H212.

The protein belongs to the aldolase class II family. RhaD subfamily. In terms of assembly, homotetramer. The cofactor is Zn(2+).

The protein resides in the cytoplasm. It carries out the reaction L-rhamnulose 1-phosphate = (S)-lactaldehyde + dihydroxyacetone phosphate. The protein operates within carbohydrate degradation; L-rhamnose degradation; glycerone phosphate from L-rhamnose: step 3/3. In terms of biological role, catalyzes the reversible cleavage of L-rhamnulose-1-phosphate to dihydroxyacetone phosphate (DHAP) and L-lactaldehyde. In Escherichia coli (strain SMS-3-5 / SECEC), this protein is Rhamnulose-1-phosphate aldolase.